Here is a 441-residue protein sequence, read N- to C-terminus: Growth/differentiation factor 9 (441 aa).

Residues 1–29 form the signal peptide; it reads MALPSNFLLGVCCFAWLCFLSSLSSQAST. The propeptide occupies 30-306; the sequence is EESQSGASEN…EVERSPRRRR (277 aa). N-linked (GlcNAc...) asparagine glycans are attached at residues Asn-163, Asn-229, Asn-258, and Asn-325. 3 cysteine pairs are disulfide-bonded: Cys-340–Cys-406, Cys-369–Cys-438, and Cys-373–Cys-440.

Belongs to the TGF-beta family. In terms of assembly, homodimer or heterodimer (Potential). But, in contrast to other members of this family, cannot be disulfide-linked. Phosphorylated; phosphorylation is critical for GDF9 function. As to expression, ovary. Strongly expressed in germinal vesicle (GV) stage oocytes, MII-stage oocytes and in zygotes.

The protein resides in the secreted. In terms of biological role, required for ovarian folliculogenesis. This Mus musculus (Mouse) protein is Growth/differentiation factor 9 (Gdf9).